Here is a 306-residue protein sequence, read N- to C-terminus: Elongation factor Ts (306 aa).

Positions 80 to 83 (TDFV) are involved in Mg(2+) ion dislocation from EF-Tu.

This sequence belongs to the EF-Ts family.

The protein resides in the cytoplasm. Its function is as follows. Associates with the EF-Tu.GDP complex and induces the exchange of GDP to GTP. It remains bound to the aminoacyl-tRNA.EF-Tu.GTP complex up to the GTP hydrolysis stage on the ribosome. The sequence is that of Elongation factor Ts from Methylorubrum populi (strain ATCC BAA-705 / NCIMB 13946 / BJ001) (Methylobacterium populi).